We begin with the raw amino-acid sequence, 192 residues long: MFEYLKGIVAKIDPAYVVLDVNGIGYKILCPTPYSYQENQPATIYVEQVVRDTGITLYGFLSLEDKELFLKLLSVSGIGPKSAVAIMAAEDTDSLASAIQNGEVKYLTRFPGVGKKTASQIVLDLKGKLGDYVKKSAVATDLTPSLQDALLALVALGYTQKEVDRITPKLAKLPENTADGYIKEALALLLKK.

The segment at 1–61 is domain I; that stretch reads MFEYLKGIVA…DTGITLYGFL (61 aa). The domain II stretch occupies residues 62-137; the sequence is SLEDKELFLK…KLGDYVKKSA (76 aa). A flexible linker region spans residues 137–140; it reads AVAT. The domain III stretch occupies residues 141-192; it reads DLTPSLQDALLALVALGYTQKEVDRITPKLAKLPENTADGYIKEALALLLKK.

This sequence belongs to the RuvA family. As to quaternary structure, homotetramer. Forms an RuvA(8)-RuvB(12)-Holliday junction (HJ) complex. HJ DNA is sandwiched between 2 RuvA tetramers; dsDNA enters through RuvA and exits via RuvB. An RuvB hexamer assembles on each DNA strand where it exits the tetramer. Each RuvB hexamer is contacted by two RuvA subunits (via domain III) on 2 adjacent RuvB subunits; this complex drives branch migration. In the full resolvosome a probable DNA-RuvA(4)-RuvB(12)-RuvC(2) complex forms which resolves the HJ.

Its subcellular location is the cytoplasm. In terms of biological role, the RuvA-RuvB-RuvC complex processes Holliday junction (HJ) DNA during genetic recombination and DNA repair, while the RuvA-RuvB complex plays an important role in the rescue of blocked DNA replication forks via replication fork reversal (RFR). RuvA specifically binds to HJ cruciform DNA, conferring on it an open structure. The RuvB hexamer acts as an ATP-dependent pump, pulling dsDNA into and through the RuvAB complex. HJ branch migration allows RuvC to scan DNA until it finds its consensus sequence, where it cleaves and resolves the cruciform DNA. The sequence is that of Holliday junction branch migration complex subunit RuvA from Lactobacillus gasseri (strain ATCC 33323 / DSM 20243 / BCRC 14619 / CIP 102991 / JCM 1131 / KCTC 3163 / NCIMB 11718 / NCTC 13722 / AM63).